The sequence spans 450 residues: Folate synthesis bifunctional protein (450 aa).

The tract at residues 1–166 (MTTWNFVCLG…TFAELAAIYP (166 aa)) is HPPK. The region spanning 180 to 441 (TQIMGIVNVT…QVEGNRRVLA (262 aa)) is the Pterin-binding domain. The interval 182 to 450 (IMGIVNVTDD…AAAAWSGMPV (269 aa)) is DHPS. Asparagine 187 is a Mg(2+) binding site. (7,8-dihydropterin-6-yl)methyl diphosphate contacts are provided by residues threonine 227, aspartate 267, asparagine 287, aspartate 358, lysine 395, and 429-431 (RVH).

This sequence in the C-terminal section; belongs to the DHPS family. It in the N-terminal section; belongs to the HPPK family. Mg(2+) serves as cofactor.

It catalyses the reaction 6-hydroxymethyl-7,8-dihydropterin + ATP = (7,8-dihydropterin-6-yl)methyl diphosphate + AMP + H(+). The enzyme catalyses (7,8-dihydropterin-6-yl)methyl diphosphate + 4-aminobenzoate = 7,8-dihydropteroate + diphosphate. The protein operates within cofactor biosynthesis; tetrahydrofolate biosynthesis; 2-amino-4-hydroxy-6-hydroxymethyl-7,8-dihydropteridine diphosphate from 7,8-dihydroneopterin triphosphate: step 4/4. It functions in the pathway cofactor biosynthesis; tetrahydrofolate biosynthesis; 7,8-dihydrofolate from 2-amino-4-hydroxy-6-hydroxymethyl-7,8-dihydropteridine diphosphate and 4-aminobenzoate: step 1/2. The chain is Folate synthesis bifunctional protein (folKP) from Chlamydia muridarum (strain MoPn / Nigg).